A 305-amino-acid chain; its full sequence is Probable cell division protein WhiA (305 aa).

The segment at residues 272–305 (SIQQLADSLTVPITKSGVNHRLRKINKIADELTD) is a DNA-binding region (H-T-H motif).

This sequence belongs to the WhiA family.

In terms of biological role, involved in cell division and chromosome segregation. The chain is Probable cell division protein WhiA from Streptococcus suis (strain 98HAH33).